The chain runs to 873 residues: Nitrate reductase [NADPH] (873 aa).

A disordered region spans residues 30–61 (TELDTADIPLPPPSKEPTEVLSLDKTTPDSHV). Residue Cys150 participates in Mo-molybdopterin binding. The Cytochrome b5 heme-binding domain maps to 512–587 (TRIIDLEEFK…MPDYHIGTLD (76 aa)). Residues His547 and His570 each contribute to the heme site. An FAD-binding FR-type domain is found at 616–729 (KAWTKATLTK…KGPTGRFEYL (114 aa)). FAD-binding positions include 672-675 (RSYT), 689-693 (LIKIY), 703-705 (KMT), and Thr756. Residue 843 to 852 (MVLVCGPEAM) participates in NADP(+) binding.

This sequence belongs to the nitrate reductase family. As to quaternary structure, homodimer. It depends on FAD as a cofactor. Heme serves as cofactor. The cofactor is Mo-molybdopterin.

The enzyme catalyses nitrite + NADP(+) + H2O = nitrate + NADPH + H(+). Nitrate reductase is a key enzyme involved in the first step of nitrate assimilation in plants, fungi and bacteria. The polypeptide is Nitrate reductase [NADPH] (niaD) (Emericella nidulans (strain FGSC A4 / ATCC 38163 / CBS 112.46 / NRRL 194 / M139) (Aspergillus nidulans)).